Here is a 243-residue protein sequence, read N- to C-terminus: ATP synthase subunit a (243 aa).

Transmembrane regions (helical) follow at residues 28–48 (SSLY…AGVF), 52–72 (VIPG…LGII), 83–103 (YFPL…VGML), 114–134 (HIVV…LIGL), 141–161 (FFAM…MIFL), 177–197 (LTAN…FVYP), 200–220 (LLIS…EVFI), and 221–241 (AMLQ…DSLF).

It belongs to the ATPase A chain family. F-type ATPases have 2 components, CF(1) - the catalytic core - and CF(0) - the membrane proton channel. CF(1) has five subunits: alpha(3), beta(3), gamma(1), delta(1), epsilon(1). CF(0) has three main subunits: a(1), b(2) and c(9-12). The alpha and beta chains form an alternating ring which encloses part of the gamma chain. CF(1) is attached to CF(0) by a central stalk formed by the gamma and epsilon chains, while a peripheral stalk is formed by the delta and b chains.

Its subcellular location is the cell inner membrane. In terms of biological role, key component of the proton channel; it plays a direct role in the translocation of protons across the membrane. This Neorickettsia sennetsu (strain ATCC VR-367 / Miyayama) (Ehrlichia sennetsu) protein is ATP synthase subunit a.